The sequence spans 199 residues: Protein shisa-like-1 (199 aa).

The first 25 residues, 1 to 25, serve as a signal peptide directing secretion; sequence MTSCGQQSLNVLAVLFSLLFSAVLS. The Extracellular portion of the chain corresponds to 26–97; it reads AHFRVCEPYT…SEGYMHNNYT (72 aa). Asn-53 and Asn-95 each carry an N-linked (GlcNAc...) asparagine glycan. The chain crosses the membrane as a helical span at residues 98-118; sequence ALLGVWIYGFFVLMLLVLDLL. The Cytoplasmic portion of the chain corresponds to 119–199; that stretch reads YYSAMNYDIC…PLMTFQSSSA (81 aa). A disordered region spans residues 146-199; that stretch reads PRRWGNPARAPRPGQRAPQPQPPPGPLPQAPQAVHTLRGDAHSPPLMTFQSSSA. The segment covering 152–163 has biased composition (low complexity); the sequence is PARAPRPGQRAP. Residues 164 to 174 are compositionally biased toward pro residues; that stretch reads QPQPPPGPLPQ.

This sequence belongs to the shisa family.

It is found in the membrane. The polypeptide is Protein shisa-like-1 (Homo sapiens (Human)).